A 427-amino-acid polypeptide reads, in one-letter code: POU domain protein CF1A (427 aa).

Disordered regions lie at residues 39 to 77 (YMQHHHHHHAAAAAAAHHQLPSSPSPNGQGNGGGLGLGS), 196 to 217 (HHHMGGGDRDAISGGEEDTPTS), 288 to 309 (TTGSPTSIDKIAAQGRKRKKRT), and 390 to 427 (HDMHGSPMGTHSHSHSPPMLSPQNMQSSAVAAHQLAAH). The span at 49 to 66 (AAAAAAHHQLPSSPSPNG) shows a compositional bias: low complexity. A compositionally biased stretch (gly residues) spans 67–77 (QGNGGGLGLGS). Residues 212-286 (EDTPTSDDLE…LLQKWLEEAD (75 aa)) enclose the POU-specific domain. The homeobox DNA-binding region spans 304–363 (KRKKRTSIEVSVKGALEQHFHKQPKPSAQEITSLADSLQLEKEVVRVWFCNRRQKEKRMT).

The protein belongs to the POU transcription factor family. Class-3 subfamily. In terms of tissue distribution, coexpressed with acj6 in overlapping subsets of neurons in the embryonic epidermis and central nervous system. First detected in the precursor of the tracheal pits and the stomodeal invagination and later in the peripheral nervous system.

The protein localises to the nucleus. In terms of biological role, binds to a DNA sequence element required for the expression of the dopa decarboxylase gene (Ddc) in specific dopaminergic neurons. Could also play an early role in specific ectodermal cells, and a subsequent role in the embryonic nervous system. The chain is POU domain protein CF1A (vvl) from Drosophila melanogaster (Fruit fly).